A 374-amino-acid polypeptide reads, in one-letter code: Queuine tRNA-ribosyltransferase (374 aa).

The active-site Proton acceptor is D89. Substrate is bound by residues 89–93, D143, Q185, and G212; that span reads DSGGF. An RNA binding region spans residues 243 to 249; sequence GVGKPED. Residue D262 is the Nucleophile of the active site. Residues 267–271 form an RNA binding; important for wobble base 34 recognition region; sequence TRNAR. C300, C302, C305, and H331 together coordinate Zn(2+).

This sequence belongs to the queuine tRNA-ribosyltransferase family. As to quaternary structure, homodimer. Within each dimer, one monomer is responsible for RNA recognition and catalysis, while the other monomer binds to the replacement base PreQ1. Requires Zn(2+) as cofactor.

The enzyme catalyses 7-aminomethyl-7-carbaguanine + guanosine(34) in tRNA = 7-aminomethyl-7-carbaguanosine(34) in tRNA + guanine. The protein operates within tRNA modification; tRNA-queuosine biosynthesis. Its function is as follows. Catalyzes the base-exchange of a guanine (G) residue with the queuine precursor 7-aminomethyl-7-deazaguanine (PreQ1) at position 34 (anticodon wobble position) in tRNAs with GU(N) anticodons (tRNA-Asp, -Asn, -His and -Tyr). Catalysis occurs through a double-displacement mechanism. The nucleophile active site attacks the C1' of nucleotide 34 to detach the guanine base from the RNA, forming a covalent enzyme-RNA intermediate. The proton acceptor active site deprotonates the incoming PreQ1, allowing a nucleophilic attack on the C1' of the ribose to form the product. After dissociation, two additional enzymatic reactions on the tRNA convert PreQ1 to queuine (Q), resulting in the hypermodified nucleoside queuosine (7-(((4,5-cis-dihydroxy-2-cyclopenten-1-yl)amino)methyl)-7-deazaguanosine). The polypeptide is Queuine tRNA-ribosyltransferase (Saccharophagus degradans (strain 2-40 / ATCC 43961 / DSM 17024)).